Consider the following 83-residue polypeptide: Exodeoxyribonuclease 7 small subunit (83 aa).

This sequence belongs to the XseB family. As to quaternary structure, heterooligomer composed of large and small subunits.

It localises to the cytoplasm. It catalyses the reaction Exonucleolytic cleavage in either 5'- to 3'- or 3'- to 5'-direction to yield nucleoside 5'-phosphates.. Its function is as follows. Bidirectionally degrades single-stranded DNA into large acid-insoluble oligonucleotides, which are then degraded further into small acid-soluble oligonucleotides. The protein is Exodeoxyribonuclease 7 small subunit of Aeromonas salmonicida (strain A449).